The sequence spans 242 residues: Ribonuclease 3 (242 aa).

Residues 18 to 146 (APAIEAKLGY…IIGAIYLDGG (129 aa)) form the RNase III domain. Position 59 (Glu-59) interacts with Mg(2+). Asp-63 is an active-site residue. Positions 132 and 135 each coordinate Mg(2+). The active site involves Glu-135. The 70-residue stretch at 172–241 (NWKALLQDYC…AADALSRVEL (70 aa)) folds into the DRBM domain. The segment covering 218 to 227 (RGKGTSKKEA) has biased composition (basic and acidic residues). The tract at residues 218-242 (RGKGTSKKEAQQAAAADALSRVELP) is disordered.

It belongs to the ribonuclease III family. In terms of assembly, homodimer. The cofactor is Mg(2+).

It is found in the cytoplasm. It catalyses the reaction Endonucleolytic cleavage to 5'-phosphomonoester.. In terms of biological role, digests double-stranded RNA. Involved in the processing of primary rRNA transcript to yield the immediate precursors to the large and small rRNAs (23S and 16S). Processes some mRNAs, and tRNAs when they are encoded in the rRNA operon. Processes pre-crRNA and tracrRNA of type II CRISPR loci if present in the organism. This chain is Ribonuclease 3, found in Protochlamydia amoebophila (strain UWE25).